A 563-amino-acid polypeptide reads, in one-letter code: Tripeptidyl-peptidase 1 (563 aa).

Residues 1–19 (MGLQACLLGLFALILSGKC) form the signal peptide. Residues 20–195 (SYSPEPDQRR…PEPQVTGTVG (176 aa)) constitute a propeptide, removed in mature form. A disulfide bridge links Cys111 with Cys122. In terms of domain architecture, Peptidase S53 spans 199-563 (GVTPSVIRKR…PALLKTLLNP (365 aa)). N-linked (GlcNAc...) asparagine glycosylation is found at Asn210 and Asn222. Active-site charge relay system residues include Glu272 and Asp276. N-linked (GlcNAc...) asparagine glycans are attached at residues Asn286, Asn313, and Asn443. Cystine bridges form between Cys365–Cys526 and Cys522–Cys537. The active-site Charge relay system is Ser475. Positions 517 and 518 each coordinate Ca(2+). Gly539, Gly541, and Asp543 together coordinate Ca(2+).

As to quaternary structure, monomer. Interacts with CLN5. Interacts with CLN3. Requires Ca(2+) as cofactor. In terms of processing, activated by autocatalytic proteolytical processing upon acidification. N-glycosylation is required for processing and activity.

It localises to the lysosome. Its subcellular location is the melanosome. The catalysed reaction is Release of an N-terminal tripeptide from a polypeptide, but also has endopeptidase activity.. Lysosomal serine protease with tripeptidyl-peptidase I activity. May act as a non-specific lysosomal peptidase which generates tripeptides from the breakdown products produced by lysosomal proteinases. Requires substrates with an unsubstituted N-terminus. The sequence is that of Tripeptidyl-peptidase 1 (TPP1) from Macaca fascicularis (Crab-eating macaque).